The sequence spans 623 residues: uncharacterized protein (623 aa).

5 consecutive transmembrane segments (helical) span residues 242–262 (IALA…ITWL), 288–308 (IVSP…LDIF), 318–338 (VSMW…IALF), 361–381 (VINL…LLGV), and 387–407 (FNVS…ALAV).

This sequence belongs to the MscS (TC 1.A.23) family.

It is found in the cell membrane. This is an uncharacterized protein from Helicobacter pylori (strain J99 / ATCC 700824) (Campylobacter pylori J99).